The sequence spans 389 residues: Chalcone synthase (389 aa).

The active site involves Cys-164.

Belongs to the thiolase-like superfamily. Chalcone/stilbene synthases family.

The catalysed reaction is (E)-4-coumaroyl-CoA + 3 malonyl-CoA + 3 H(+) = 2',4,4',6'-tetrahydroxychalcone + 3 CO2 + 4 CoA. The protein operates within secondary metabolite biosynthesis; flavonoid biosynthesis. Its function is as follows. The primary product of this enzyme is 4,2',4',6'-tetrahydroxychalcone (also termed naringenin-chalcone or chalcone) which can under specific conditions spontaneously isomerize into naringenin. The chain is Chalcone synthase (CHS) from Hydrangea macrophylla (Bigleaf hydrangea).